The primary structure comprises 552 residues: Capsid protein precursor (552 aa).

The interval 1–41 is disordered; the sequence is MKQNDTKKTTQRRNSKKYSSKTNRGTKRAPRDQEVGTGAQE. A compositionally biased stretch (basic residues) spans 9–28; that stretch reads TTQRRNSKKYSSKTNRGTKR.

Homodimer. In terms of processing, the 7 kDa polypeptide is acetylated. Post-translationally, autocatalytic proteolysis releases a post-translationally modified peptide that remains associated with nucleic acid within the virion. This peptide is observed only when nucleic acid is packaged in the capsid.

The protein localises to the virion. Functionally, the capsid protein self-assembles to form an icosahedral capsid with a T=2 symmetry made of 120 subunits. The protein is Capsid protein precursor (Segment-1) of Human picobirnavirus (strain Human/Thailand/Hy005102/-) (PBV).